A 347-amino-acid chain; its full sequence is Dual-specificity RNA methyltransferase RlmN (347 aa).

The active-site Proton acceptor is the Glu-93. Positions 99-327 (DEGRNTLCIS…VITRDSRGSD (229 aa)) constitute a Radical SAM core domain. A disulfide bridge connects residues Cys-106 and Cys-332. [4Fe-4S] cluster-binding residues include Cys-113, Cys-117, and Cys-120. Residues 158 to 159 (GE), Ser-190, 213 to 215 (SLN), and Asn-289 each bind S-adenosyl-L-methionine. Cys-332 functions as the S-methylcysteine intermediate in the catalytic mechanism.

The protein belongs to the radical SAM superfamily. RlmN family. Requires [4Fe-4S] cluster as cofactor.

The protein resides in the cytoplasm. The enzyme catalyses adenosine(2503) in 23S rRNA + 2 reduced [2Fe-2S]-[ferredoxin] + 2 S-adenosyl-L-methionine = 2-methyladenosine(2503) in 23S rRNA + 5'-deoxyadenosine + L-methionine + 2 oxidized [2Fe-2S]-[ferredoxin] + S-adenosyl-L-homocysteine. The catalysed reaction is adenosine(37) in tRNA + 2 reduced [2Fe-2S]-[ferredoxin] + 2 S-adenosyl-L-methionine = 2-methyladenosine(37) in tRNA + 5'-deoxyadenosine + L-methionine + 2 oxidized [2Fe-2S]-[ferredoxin] + S-adenosyl-L-homocysteine. Specifically methylates position 2 of adenine 2503 in 23S rRNA and position 2 of adenine 37 in tRNAs. m2A2503 modification seems to play a crucial role in the proofreading step occurring at the peptidyl transferase center and thus would serve to optimize ribosomal fidelity. The sequence is that of Dual-specificity RNA methyltransferase RlmN from Pelobacter propionicus (strain DSM 2379 / NBRC 103807 / OttBd1).